The sequence spans 491 residues: 3-octaprenyl-4-hydroxybenzoate carboxy-lyase (491 aa).

N172 lines the Mn(2+) pocket. Prenylated FMN contacts are provided by residues 175 to 177 (IYR), 189 to 191 (RWL), and 194 to 195 (RG). E238 contacts Mn(2+). D287 acts as the Proton donor in catalysis.

This sequence belongs to the UbiD family. In terms of assembly, homohexamer. Prenylated FMN serves as cofactor. It depends on Mn(2+) as a cofactor.

The protein localises to the cell membrane. The catalysed reaction is a 4-hydroxy-3-(all-trans-polyprenyl)benzoate + H(+) = a 2-(all-trans-polyprenyl)phenol + CO2. Its pathway is cofactor biosynthesis; ubiquinone biosynthesis. Functionally, catalyzes the decarboxylation of 3-octaprenyl-4-hydroxy benzoate to 2-octaprenylphenol, an intermediate step in ubiquinone biosynthesis. The protein is 3-octaprenyl-4-hydroxybenzoate carboxy-lyase of Histophilus somni (strain 129Pt) (Haemophilus somnus).